Reading from the N-terminus, the 322-residue chain is Cytochrome c biogenesis protein CcsA (322 aa).

Transmembrane regions (helical) follow at residues 9-29, 44-64, 71-91, 143-163, 226-246, 255-275, and 287-307; these read IFTH…LITL, GMIV…IYSG, LYES…VPYF, MILS…LLVI, VISL…VWAN, WDPK…YLHI, and AIVA…VNLL.

Belongs to the CcmF/CycK/Ccl1/NrfE/CcsA family. May interact with Ccs1.

The protein resides in the plastid. The protein localises to the chloroplast thylakoid membrane. Functionally, required during biogenesis of c-type cytochromes (cytochrome c6 and cytochrome f) at the step of heme attachment. The protein is Cytochrome c biogenesis protein CcsA of Lactuca sativa (Garden lettuce).